Here is a 159-residue protein sequence, read N- to C-terminus: MKITLITVGKVKEKYLRDAIAEYSKRLGRYCKLGIVEVADEKTPEHASDGLERQIKAKEGERIAKHIRDDAFVIALAIEGKQLTSEQLAAKINDLGLHGTSHIQLIIGGSLGLDPAILKRADYLLSFSKMTFPHQLMRVILLEQIYRAYKINAGEPYHK.

Residues Leu-76, Gly-108, and 127-132 (FSKMTF) each bind S-adenosyl-L-methionine.

It belongs to the RNA methyltransferase RlmH family. In terms of assembly, homodimer.

It localises to the cytoplasm. It carries out the reaction pseudouridine(1915) in 23S rRNA + S-adenosyl-L-methionine = N(3)-methylpseudouridine(1915) in 23S rRNA + S-adenosyl-L-homocysteine + H(+). Functionally, specifically methylates the pseudouridine at position 1915 (m3Psi1915) in 23S rRNA. The sequence is that of Ribosomal RNA large subunit methyltransferase H from Bifidobacterium adolescentis (strain ATCC 15703 / DSM 20083 / NCTC 11814 / E194a).